The primary structure comprises 352 residues: Protein-glutamate methylesterase/protein-glutamine glutaminase 2 (352 aa).

Residues 1-116 enclose the Response regulatory domain; the sequence is MIVDDSAIVR…KDFIQDAASD (116 aa). Asp-50 is modified (4-aspartylphosphate). Positions 159–351 constitute a CheB-type methylesterase domain; the sequence is SKTTEHVVAI…QEIMRYAHLK (193 aa). Active-site residues include Ser-171, His-197, and Asp-293.

It belongs to the CheB family. Phosphorylated by CheA. Phosphorylation of the N-terminal regulatory domain activates the methylesterase activity.

It is found in the cytoplasm. The catalysed reaction is [protein]-L-glutamate 5-O-methyl ester + H2O = L-glutamyl-[protein] + methanol + H(+). It carries out the reaction L-glutaminyl-[protein] + H2O = L-glutamyl-[protein] + NH4(+). In terms of biological role, involved in chemotaxis. Part of a chemotaxis signal transduction system that modulates chemotaxis in response to various stimuli. Catalyzes the demethylation of specific methylglutamate residues introduced into the chemoreceptors (methyl-accepting chemotaxis proteins or MCP) by CheR. Also mediates the irreversible deamidation of specific glutamine residues to glutamic acid. The chain is Protein-glutamate methylesterase/protein-glutamine glutaminase 2 from Shewanella denitrificans (strain OS217 / ATCC BAA-1090 / DSM 15013).